We begin with the raw amino-acid sequence, 96 residues long: Large ribosomal subunit protein eL43 (96 aa).

The C4-type zinc finger occupies 41-62 (CPVCAFPKLKRVGTSIWVCDKC).

This sequence belongs to the eukaryotic ribosomal protein eL43 family. It depends on Zn(2+) as a cofactor.

This is Large ribosomal subunit protein eL43 from Methanococcus maripaludis (strain C6 / ATCC BAA-1332).